Consider the following 192-residue polypeptide: UPF0301 protein BceJ2315_30870 (192 aa).

Belongs to the UPF0301 (AlgH) family.

The chain is UPF0301 protein BceJ2315_30870 from Burkholderia cenocepacia (strain ATCC BAA-245 / DSM 16553 / LMG 16656 / NCTC 13227 / J2315 / CF5610) (Burkholderia cepacia (strain J2315)).